The following is a 394-amino-acid chain: Phosphoglycerate kinase (394 aa).

Substrate contacts are provided by residues 21-23 (DFN), Arg-36, 59-62 (HLGR), Arg-118, and Arg-151. The residue at position 183 (Ser-183) is a Phosphoserine. The ATP site is built by Lys-201 and Gly-292. At Thr-299 the chain carries Phosphothreonine. ATP contacts are provided by residues Glu-323 and 350-353 (GGDS).

Belongs to the phosphoglycerate kinase family. As to quaternary structure, monomer.

It is found in the cytoplasm. It carries out the reaction (2R)-3-phosphoglycerate + ATP = (2R)-3-phospho-glyceroyl phosphate + ADP. The protein operates within carbohydrate degradation; glycolysis; pyruvate from D-glyceraldehyde 3-phosphate: step 2/5. This is Phosphoglycerate kinase from Bacillus anthracis (strain A0248).